Reading from the N-terminus, the 319-residue chain is Ribonuclease Z (319 aa).

Residues H62, H64, D66, H67, H145, D215, and H273 each coordinate Zn(2+). D66 (proton acceptor) is an active-site residue.

Belongs to the RNase Z family. In terms of assembly, homodimer. The cofactor is Zn(2+).

It carries out the reaction Endonucleolytic cleavage of RNA, removing extra 3' nucleotides from tRNA precursor, generating 3' termini of tRNAs. A 3'-hydroxy group is left at the tRNA terminus and a 5'-phosphoryl group is left at the trailer molecule.. In terms of biological role, zinc phosphodiesterase, which displays some tRNA 3'-processing endonuclease activity. Probably involved in tRNA maturation, by removing a 3'-trailer from precursor tRNA. The sequence is that of Ribonuclease Z from Borreliella afzelii (strain PKo) (Borrelia afzelii).